A 473-amino-acid chain; its full sequence is Zinc transporter SLC39A7 (473 aa).

Residues 11–31 (VAVGLLTWAALGLLVAGHGGH) form a helical membrane-spanning segment. 2 stretches are compositionally biased toward basic and acidic residues: residues 44 to 56 (GHSHRHSHEDFHH) and 66 to 114 (HTHE…EHSH). Residues 44–120 (GHSHRHSHED…EHSHGGYGES (77 aa)) form a disordered region. The residue at position 66 (His66) is a Pros-methylhistidine. A run of 3 helical transmembrane segments spans residues 138–158 (ALGATVLISAAPFFVLFLIPV), 169–189 (LQILLSFASGGLLGDAFLHLI), and 214–234 (GPILSVGLWVLSGIVAFLVVE). A disordered region spans residues 243 to 316 (GHEHSHGHGH…QHSGEEKAGS (74 aa)). 2 positions are modified to phosphoserine: Ser278 and Ser279. A compositionally biased stretch (basic and acidic residues) spans 298 to 316 (RPKDGPVRPQHSGEEKAGS). A helical membrane pass occupies residues 388-408 (LLTAVGALAGTAFALLTEGGA). Residues 428–473 (GDQAATQASPRSTSLPPVGEEDFREDPGPRQKGQQEKSGINVNCVS) form a disordered region. A compositionally biased stretch (polar residues) spans 431 to 442 (AATQASPRSTSL). The segment covering 452 to 462 (EDPGPRQKGQQ) has biased composition (basic and acidic residues). Over residues 463–473 (EKSGINVNCVS) the composition is skewed to polar residues.

It belongs to the ZIP transporter (TC 2.A.5) family. KE4/Catsup subfamily. As to quaternary structure, homodimer. In terms of processing, methylation at some His residue by METTL9 leads to reduced zinc-binding. Rapidly phosphorylated by CK2 following Zn(2+) treatment. This phosphorylation is required for efficient cytosolic Zn(2+) release.

The protein resides in the endoplasmic reticulum membrane. It localises to the golgi apparatus. The protein localises to the cis-Golgi network membrane. The catalysed reaction is Zn(2+)(in) = Zn(2+)(out). Transports Zn(2+) from the endoplasmic reticulum (ER)/Golgi apparatus to the cytosol, playing an essential role in the regulation of cytosolic zinc levels. Acts as a gatekeeper of zinc release from intracellular stores, requiring post-translational activation by phosphorylation on residues, resulting in activation of multiple downstream pathways leading to cell growth and proliferation. Has an essential role in B cell development and is required for proper B cell receptor signaling. Plays an important role in maintaining intestinal epithelial homeostasis and skin dermis development by regulating ER function. Controls cell signaling pathways involved in glucose metabolism in skeletal muscle. Has a protective role against ER stress in different biological contexts. Mediates Zn(2+)-induced ferroptosis. This is Zinc transporter SLC39A7 (SLC39A7) from Sus scrofa (Pig).